The sequence spans 625 residues: Exonuclease mut-7 homolog (625 aa).

Serine 17 is subject to Phosphoserine. Positions leucine 410–serine 602 constitute a 3'-5' exonuclease domain.

It belongs to the mut-7 family. In terms of assembly, interacts with AGO1; the interaction is not RNA dependent. Requires Mg(2+) as cofactor.

Functionally, possesses 3'-5' exoribonuclease activity. Required for 3'-end trimming of AGO1-bound miRNAs, in particular multiple-isoform miRNAs, which represents a critical step in miRNA maturation. This Drosophila melanogaster (Fruit fly) protein is Exonuclease mut-7 homolog (Nbr).